The chain runs to 86 residues: MKSIVFVALFGLALLAVVCSASEDAHKELLKEVVRAMVVDKTDAVQAGERECRWYLGGCSQDGDCCKHLQCHSNYEWCIWDGTFSK.

Residues 1–21 form the signal peptide; that stretch reads MKSIVFVALFGLALLAVVCSA. A propeptide spanning residues 22-50 is cleaved from the precursor; that stretch reads SEDAHKELLKEVVRAMVVDKTDAVQAGER. 3 disulfides stabilise this stretch: Cys52-Cys66, Cys59-Cys71, and Cys65-Cys78.

It belongs to the neurotoxin 10 (Hwtx-1) family. 17 (Hntx-9) subfamily. As to expression, expressed by the venom gland.

It localises to the secreted. Functionally, ion channel inhibitor. In Cyriopagopus hainanus (Chinese bird spider), this protein is Omega-theraphotoxin-Hhn1f 4.